We begin with the raw amino-acid sequence, 977 residues long: DNA-directed RNA polymerase 3B, chloroplastic (977 aa).

The transit peptide at 1–71 (MASTASYSPS…NNIQSQTTVC (71 aa)) directs the protein to the chloroplast. Active-site residues include aspartate 678, lysine 753, and aspartate 910.

Belongs to the phage and mitochondrial RNA polymerase family.

It is found in the plastid. Its subcellular location is the chloroplast. The enzyme catalyses RNA(n) + a ribonucleoside 5'-triphosphate = RNA(n+1) + diphosphate. Functionally, DNA-dependent RNA polymerase catalyzes the transcription of DNA into RNA using the four ribonucleoside triphosphates as substrates. The sequence is that of DNA-directed RNA polymerase 3B, chloroplastic (RPOT3-TOM) from Nicotiana tabacum (Common tobacco).